Here is a 72-residue protein sequence, read N- to C-terminus: Gas vesicle protein A (72 aa).

Belongs to the gas vesicle GvpA family. The gas vesicle shell is 2 nm thick and consists of a single layer of this protein. It forms helical ribs nearly perpendicular to the long axis of the vesicle.

It localises to the gas vesicle shell. Functionally, gas vesicles are hollow, gas filled proteinaceous nanostructures found in some microorganisms. During planktonic growth they allow positioning of the organism at a favorable depth for light or nutrient acquisition. GvpA forms the protein shell. The polypeptide is Gas vesicle protein A (Planktothrix agardhii (Oscillatoria agardhii)).